We begin with the raw amino-acid sequence, 138 residues long: von Willebrand factor C domain-containing protein 2-like (138 aa).

The signal sequence occupies residues 1 to 21 (MALHIHEACILLLVIPGLVTS). Residues 51–110 (KGCVDDSGFVYKLGERFFPGHSNCPCVCALDGPVCDQPECPKIHPKCTKVEHNGCCPECK) enclose the VWFC domain.

Peripherally associated with AMPAR complex. AMPAR complex consists of an inner core made of 4 pore-forming GluA/GRIA proteins (GRIA1, GRIA2, GRIA3 and GRIA4) and 4 major auxiliary subunits arranged in a twofold symmetry. One of the two pairs of distinct binding sites is occupied either by CNIH2, CNIH3 or CACNG2, CACNG3. The other harbors CACNG2, CACNG3, CACNG4, CACNG8 or GSG1L. This inner core of AMPAR complex is complemented by outer core constituents binding directly to the GluA/GRIA proteins at sites distinct from the interaction sites of the inner core constituents. Outer core constituents include at least PRRT1, PRRT2, CKAMP44/SHISA9, FRRS1L and NRN1. The proteins of the inner and outer core serve as a platform for other, more peripherally associated AMPAR constituents, including VWC2L. Alone or in combination, these auxiliary subunits control the gating and pharmacology of the AMPAR complex and profoundly impact their biogenesis and protein processing.

It is found in the secreted. Its subcellular location is the synapse. In terms of biological role, may play a role in neurogenesis. May play a role in bone differentiation and matrix mineralization. The polypeptide is von Willebrand factor C domain-containing protein 2-like (VWC2L) (Macaca fascicularis (Crab-eating macaque)).